The following is a 359-amino-acid chain: MAGHLASDFAFSPPPGGGGDGPWGAEPGWVDPLTWLSFQGPPGGPGIGPGVGPGSEVWGIPPCPPPYELCGGMAYCGPQVGVGLVPQGGLETSQPESEAGVGVESNSNGASPEPCTVPPGAVKLEKEKLEQNPEKSQDIKALQKELEQFAKLLKQKRITLGYTQADVGLILGVLFGKVFSQKTICRFEALQLSFKNMCKLRPLLQKWVEEADNNENLQEICKAETLMQARKRKRTSIENRVRGNLENLFLQCPKPTLQISHIAQQLGLEKDVVRVWFCNRRQKGKRSSSDYAQREDFEAAGSPFSGGPVSFPPAPGPHFGTPGYGSPHFTALYSSVPFPEGEVFPPVSVITLGSPMHSN.

Disordered stretches follow at residues 1–53 (MAGH…GVGP) and 87–116 (QGGL…EPCT). The residue at position 111 (S111) is a Phosphoserine. One can recognise a POU-specific domain in the interval 138 to 212 (DIKALQKELE…LLQKWVEEAD (75 aa)). Positions 229 to 288 (ARKRKRTSIENRVRGNLENLFLQCPKPTLQISHIAQQLGLEKDVVRVWFCNRRQKGKRSS) form a DNA-binding region, homeobox. Residue T235 is modified to Phosphothreonine. Phosphoserine is present on residues S236, S288, and S289. A disordered region spans residues 287–322 (SSSDYAQREDFEAAGSPFSGGPVSFPPAPGPHFGTP). Residues 299 to 309 (AAGSPFSGGPV) show a composition bias toward low complexity. S354 is subject to Phosphoserine.

Belongs to the POU transcription factor family. Class-5 subfamily. As to expression, detected in epithelial cells of the prostate (at protein level). Detected at the mRNA level in several cancer tissues (breast, uterine cervix, lung, thyroid gland, esophagus, colon, urinary bladder, and glioma).

Its subcellular location is the nucleus. It localises to the cytoplasm. Functionally, shows weak transcriptional activator activity. The sequence is that of POU domain, class 5, transcription factor 1B (POU5F1B) from Homo sapiens (Human).